The sequence spans 242 residues: ATP synthase subunit a (242 aa).

The next 6 helical transmembrane spans lie at 29-49 (SSIY…LAFY), 84-104 (FIPL…LGMT), 114-134 (IIVT…VGFI), 140-160 (FLTL…MIVI), 189-209 (VIAS…IPLM), and 210-230 (VILI…FTIL).

The protein belongs to the ATPase A chain family. As to quaternary structure, F-type ATPases have 2 components, CF(1) - the catalytic core - and CF(0) - the membrane proton channel. CF(1) has five subunits: alpha(3), beta(3), gamma(1), delta(1), epsilon(1). CF(0) has three main subunits: a(1), b(2) and c(9-12). The alpha and beta chains form an alternating ring which encloses part of the gamma chain. CF(1) is attached to CF(0) by a central stalk formed by the gamma and epsilon chains, while a peripheral stalk is formed by the delta and b chains.

The protein resides in the cell inner membrane. Key component of the proton channel; it plays a direct role in the translocation of protons across the membrane. The protein is ATP synthase subunit a of Rickettsia prowazekii (strain Madrid E).